The primary structure comprises 525 residues: AP-4 complex accessory subunit Tepsin (525 aa).

Positions arginine 8–proline 141 constitute an ENTH domain. The segment at leucine 139–glycine 229 is disordered. Residues serine 193 to serine 225 show a composition bias toward low complexity. Serine 333 and serine 356 each carry phosphoserine. The segment at leucine 355–tryptophan 465 is disordered. Over residues proline 393–serine 412 the composition is skewed to low complexity. Over residues serine 413–glycine 429 the composition is skewed to pro residues. Basic and acidic residues predominate over residues alanine 434–arginine 448. The interaction with AP4B1 stretch occupies residues arginine 467–valine 477. The segment at alanine 487–alanine 525 is disordered. The segment at serine 515–alanine 525 is interaction with AP4E1.

In terms of assembly, interacts with AP4B1 and AP4E1; the interaction is direct and mediates the association of TEPSIN with the adapter-like complex 4 (AP-4), a heterotetramer composed of AP4B1, AP4E1, AP4M1 and AP4S1.

It localises to the golgi apparatus. It is found in the trans-Golgi network membrane. Its subcellular location is the cytoplasmic vesicle. The protein resides in the cytoplasm. The protein localises to the cytosol. In terms of biological role, associates with the adapter-like complex 4 (AP-4) and may therefore play a role in vesicular trafficking of proteins at the trans-Golgi network. The protein is AP-4 complex accessory subunit Tepsin of Homo sapiens (Human).